Reading from the N-terminus, the 207-residue chain is MGGKWSKSSLVGWPAIRERIRKTDPAADGVGAVSRDLEKHGAITSSNTASTNDTCAWLEAQEESEEVGFPVRPQVPLRPMTYKEAVDLSHFLKEKGGLEGLIWSKKRQEILDLWVYNTQGIFPDWQNYTPGPGIRYPLTFGWCFQLVPVDPQEVEEATEREDNCLLHPMCQQGMEDPERQVLMWRFNSRLALEHKARELHPEFYKDC.

Residue G2 is the site of N-myristoyl glycine; by host attachment. Position 6 is a phosphoserine; by host (S6). The interval 62-66 is acidic; interacts with host PACS1 and PACS2; stabilizes the interaction of NEF/MHC-I with host AP1M1; necessary for MHC-I internalization; that stretch reads EESEE. The interval 70 to 79 is SH3-binding; interaction with Src family tyrosine kinases; that stretch reads PVRPQVPLRP. Positions 73 to 76 match the PxxP; stabilizes the interaction of NEF/MHC-I with host AP1M1; necessary for MHC-I internalization motif; the sequence is PQVP. The segment at 109-125 is mediates dimerization, Nef-PTE1 interaction; it reads EILDLWVYNTQGIFPDW. Positions 149 to 181 are binding to ATP6V1H; the sequence is VDPQEVEEATEREDNCLLHPMCQQGMEDPERQV. The short motif at 165–166 is the Dileucine internalization motif; necessary for CD4 internalization element; it reads LL. The Diacidic; necessary for CD4 internalization motif lies at 175–176; sequence ED.

Belongs to the lentivirus primate group Nef protein family. In terms of assembly, monomer; cytosolic form. Homodimer; membrane bound form. Interacts with Nef associated p21-activated kinase (PAK2); this interaction activates PAK2. Associates with the Nef-MHC-I-AP1 complex; this complex is required for MHC-I internalization. Interacts (via C-terminus) with host PI3-kinase. Interacts with host PACS1; this interaction seems to be weak. Interacts with host PACS2. Interacts with host LCK and MAPK3; these interactions inhibit the kinase activity of the latter. Interacts with host ATP6V1H; this interaction may play a role in CD4 endocytosis. Associates with the CD4-Nef-AP2 complex; this complex is required for CD4 internalization. Interacts with host AP2 subunit alpha and AP2 subunit sigma2. Interacts with TCR-zeta chain; this interaction up-regulates the Fas ligand (FasL) surface expression. Interacts with host HCK, LYN, and SRC; these interactions activate the Src family kinases. Interacts with MAP3K5; this interaction inhibits the Fas and TNFR-mediated death signals. Interacts with beta-COP and PTE1. Interacts with human RACK1; this increases Nef phosphorylation by PKC. Interacts with TP53; this interaction decreases the half-life of TP53, protecting the infected cell against p53-mediated apoptosis. Post-translationally, the virion-associated Nef proteins are cleaved by the viral protease to release the soluble C-terminal core protein. Nef is probably cleaved concomitantly with viral structural proteins on maturation of virus particles. Myristoylated. In terms of processing, phosphorylated on serine residues, probably by host PKCdelta and theta.

It is found in the host cell membrane. It localises to the virion. Its subcellular location is the secreted. The protein localises to the host Golgi apparatus membrane. In terms of biological role, factor of infectivity and pathogenicity, required for optimal virus replication. Alters numerous pathways of T-lymphocyte function and down-regulates immunity surface molecules in order to evade host defense and increase viral infectivity. Alters the functionality of other immunity cells, like dendritic cells, monocytes/macrophages and NK cells. Its function is as follows. In infected CD4(+) T-lymphocytes, down-regulates the surface MHC-I, mature MHC-II, CD4, CD28, CCR5 and CXCR4 molecules. Mediates internalization and degradation of host CD4 through the interaction of with the cytoplasmic tail of CD4, the recruitment of AP-2 (clathrin adapter protein complex 2), internalization through clathrin coated pits, and subsequent transport to endosomes and lysosomes for degradation. Diverts host MHC-I molecules to the trans-Golgi network-associated endosomal compartments by an endocytic pathway to finally target them for degradation. MHC-I down-regulation may involve AP-1 (clathrin adapter protein complex 1) or possibly Src family kinase-ZAP70/Syk-PI3K cascade recruited by PACS2. In consequence infected cells are masked for immune recognition by cytotoxic T-lymphocytes. Decreasing the number of immune receptors also prevents reinfection by more HIV particles (superinfection). Down-regulates host SERINC3 and SERINC5 thereby excluding these proteins from the viral particles. Virion infectivity is drastically higher when SERINC3 or SERINC5 are excluded from the viral envelope, because these host antiviral proteins impair the membrane fusion event necessary for subsequent virion penetration. Functionally, bypasses host T-cell signaling by inducing a transcriptional program nearly identical to that of anti-CD3 cell activation. Interaction with TCR-zeta chain up-regulates the Fas ligand (FasL). Increasing surface FasL molecules and decreasing surface MHC-I molecules on infected CD4(+) cells send attacking cytotoxic CD8+ T-lymphocytes into apoptosis. Plays a role in optimizing the host cell environment for viral replication without causing cell death by apoptosis. Protects the infected cells from apoptosis in order to keep them alive until the next virus generation is ready to strike. Inhibits the Fas and TNFR-mediated death signals by blocking MAP3K5/ASK1. Decreases the half-life of TP53, protecting the infected cell against p53-mediated apoptosis. Inhibits the apoptotic signals regulated by the Bcl-2 family proteins through the formation of a Nef/PI3-kinase/PAK2 complex that leads to activation of PAK2 and induces phosphorylation of host BAD. In terms of biological role, extracellular Nef protein targets CD4(+) T-lymphocytes for apoptosis by interacting with CXCR4 surface receptors. The polypeptide is Protein Nef (Human immunodeficiency virus type 1 group M subtype D (isolate NDK) (HIV-1)).